The sequence spans 84 residues: Large ribosomal subunit protein bL27 (84 aa).

Residues 1-24 (MAHKKGAASTKNGRDSNSQRLGVK) are disordered. Residues 9–20 (STKNGRDSNSQR) show a composition bias toward polar residues.

It belongs to the bacterial ribosomal protein bL27 family.

The sequence is that of Large ribosomal subunit protein bL27 from Nocardioides sp. (strain ATCC BAA-499 / JS614).